The chain runs to 171 residues: S-ribosylhomocysteine lyase (171 aa).

Fe cation contacts are provided by H54, H58, and C128.

The protein belongs to the LuxS family. Homodimer. Fe cation serves as cofactor.

The enzyme catalyses S-(5-deoxy-D-ribos-5-yl)-L-homocysteine = (S)-4,5-dihydroxypentane-2,3-dione + L-homocysteine. Involved in the synthesis of autoinducer 2 (AI-2) which is secreted by bacteria and is used to communicate both the cell density and the metabolic potential of the environment. The regulation of gene expression in response to changes in cell density is called quorum sensing. Catalyzes the transformation of S-ribosylhomocysteine (RHC) to homocysteine (HC) and 4,5-dihydroxy-2,3-pentadione (DPD). In Photorhabdus laumondii subsp. laumondii (strain DSM 15139 / CIP 105565 / TT01) (Photorhabdus luminescens subsp. laumondii), this protein is S-ribosylhomocysteine lyase.